A 448-amino-acid polypeptide reads, in one-letter code: Tubulin beta chain (448 aa).

GTP-binding residues include Q11, E69, S138, G142, T143, G144, N204, and N226. Position 69 (E69) interacts with Mg(2+). A disordered region spans residues 426-448 (QDAGIDEEEEEYEEEAPVDEPLE). Residues 429 to 448 (GIDEEEEEYEEEAPVDEPLE) show a composition bias toward acidic residues.

Belongs to the tubulin family. In terms of assembly, dimer of alpha and beta chains. A typical microtubule is a hollow water-filled tube with an outer diameter of 25 nm and an inner diameter of 15 nM. Alpha-beta heterodimers associate head-to-tail to form protofilaments running lengthwise along the microtubule wall with the beta-tubulin subunit facing the microtubule plus end conferring a structural polarity. Microtubules usually have 13 protofilaments but different protofilament numbers can be found in some organisms and specialized cells. The cofactor is Mg(2+).

It is found in the cytoplasm. Its subcellular location is the cytoskeleton. In terms of biological role, tubulin is the major constituent of microtubules, a cylinder consisting of laterally associated linear protofilaments composed of alpha- and beta-tubulin heterodimers. Microtubules grow by the addition of GTP-tubulin dimers to the microtubule end, where a stabilizing cap forms. Below the cap, tubulin dimers are in GDP-bound state, owing to GTPase activity of alpha-tubulin. The polypeptide is Tubulin beta chain (TUB2) (Epichloe coenophiala (Tall fescue endophyte fungus)).